Reading from the N-terminus, the 488-residue chain is Zinc finger protein 345 (488 aa).

C2H2-type zinc fingers lie at residues L62–H84, Y90–H112, F118–H140, Y146–H168, Y174–H196, Y202–H224, Y230–H252, Y258–H280, Y286–H308, Y314–H336, Y342–H364, Y370–H392, Y398–H420, Y426–H448, and Y454–H476.

It belongs to the krueppel C2H2-type zinc-finger protein family.

It is found in the nucleus. May be involved in transcriptional regulation. This chain is Zinc finger protein 345 (ZNF345), found in Homo sapiens (Human).